Consider the following 352-residue polypeptide: Threonine synthase (352 aa).

Lys59 carries the post-translational modification N6-(pyridoxal phosphate)lysine. Pyridoxal 5'-phosphate contacts are provided by residues Asn85, 185-189 (GNAGN), and Thr314.

The protein belongs to the threonine synthase family. Pyridoxal 5'-phosphate serves as cofactor.

The enzyme catalyses O-phospho-L-homoserine + H2O = L-threonine + phosphate. It functions in the pathway amino-acid biosynthesis; L-threonine biosynthesis; L-threonine from L-aspartate: step 5/5. Catalyzes the gamma-elimination of phosphate from L-phosphohomoserine and the beta-addition of water to produce L-threonine. This Bacillus subtilis (strain 168) protein is Threonine synthase (thrC).